We begin with the raw amino-acid sequence, 428 residues long: Cysteine--tRNA ligase (428 aa).

Cysteine 23 serves as a coordination point for Zn(2+). Positions 25–35 (PTVYNDLHLGN) match the 'HIGH' region motif. Residues cysteine 196, histidine 221, and glutamate 225 each contribute to the Zn(2+) site. The 'KMSKS' region motif lies at 253 to 257 (KMSKS). Lysine 256 contacts ATP.

The protein belongs to the class-I aminoacyl-tRNA synthetase family. Monomer. Zn(2+) is required as a cofactor.

The protein resides in the cytoplasm. It catalyses the reaction tRNA(Cys) + L-cysteine + ATP = L-cysteinyl-tRNA(Cys) + AMP + diphosphate. The polypeptide is Cysteine--tRNA ligase (cysS) (Mycoplasma genitalium (strain ATCC 33530 / DSM 19775 / NCTC 10195 / G37) (Mycoplasmoides genitalium)).